A 254-amino-acid polypeptide reads, in one-letter code: Alcohol dehydrogenase (254 aa).

F10 to L33 is an NAD(+) binding site. S138 contributes to the substrate binding site. Residue Y151 is the Proton acceptor of the active site.

It belongs to the short-chain dehydrogenases/reductases (SDR) family. Homodimer.

It catalyses the reaction a primary alcohol + NAD(+) = an aldehyde + NADH + H(+). The enzyme catalyses a secondary alcohol + NAD(+) = a ketone + NADH + H(+). This chain is Alcohol dehydrogenase (Adh), found in Drosophila subobscura (Fruit fly).